The sequence spans 132 residues: Small ribosomal subunit protein uS11 (132 aa).

Residues 1 to 16 (MAAGMKGKRSRRRKER) show a composition bias toward basic residues. The tract at residues 1-20 (MAAGMKGKRSRRRKERKNVE) is disordered.

This sequence belongs to the universal ribosomal protein uS11 family. As to quaternary structure, part of the 30S ribosomal subunit. Interacts with proteins S7 and S18. Binds to IF-3.

In terms of biological role, located on the platform of the 30S subunit, it bridges several disparate RNA helices of the 16S rRNA. Forms part of the Shine-Dalgarno cleft in the 70S ribosome. The sequence is that of Small ribosomal subunit protein uS11 from Clostridium botulinum (strain Hall / ATCC 3502 / NCTC 13319 / Type A).